The primary structure comprises 92 residues: Acylphosphatase (92 aa).

In terms of domain architecture, Acylphosphatase-like spans 3–92; the sequence is TKHVLVSGIV…GPRSTHFEVT (90 aa). Residues Arg-18 and Asn-36 contribute to the active site.

Belongs to the acylphosphatase family.

It catalyses the reaction an acyl phosphate + H2O = a carboxylate + phosphate + H(+). The polypeptide is Acylphosphatase (acyP) (Alcanivorax borkumensis (strain ATCC 700651 / DSM 11573 / NCIMB 13689 / SK2)).